The chain runs to 374 residues: Speckle-type POZ protein A (374 aa).

The MATH domain occupies 31 to 161 (KFSYMWTINN…DDKLTLFCEV (131 aa)). Residues 71-191 (VNPKGLDEES…PECRLADELG (121 aa)) are required for nuclear localization. In terms of domain architecture, BTB spans 173–297 (QNTMNMVKVP…MCEEALCSNL (125 aa)). The interval 297–355 (LSVENAAEILILADLHSADQLKTQAVDFINYHASDVMETSGWKSMVVSHPHLVAEAYRS) is homodimerization.

It belongs to the Tdpoz family. In terms of assembly, homodimer. Part of cullin-RING-based BCR (BTB-CUL3-RBX1) E3 ubiquitin-protein ligase complexes that contain CUL3 and SPOP, plus a target protein.

Its subcellular location is the nucleus. The protein resides in the nucleus speckle. It participates in protein modification; protein ubiquitination. Its function is as follows. Component of a cullin-RING-based BCR (BTB-CUL3-RBX1) E3 ubiquitin-protein ligase complex that mediates the ubiquitination of target proteins, leading most often to their proteasomal degradation. The protein is Speckle-type POZ protein A (spop-a) of Xenopus laevis (African clawed frog).